Reading from the N-terminus, the 332-residue chain is Ribose operon repressor (332 aa).

The HTH lacI-type domain occupies 2-56; the sequence is ATMKDIARLAQVSTSTVSHVINGSRFVSDEIREKVMRIVAELNYTPSAVARSLKV. Residues 4–23 constitute a DNA-binding region (H-T-H motif); it reads MKDIARLAQVSTSTVSHVIN.

Its function is as follows. Transcriptional repressor for the ribose rbsDACBK operon. This Haemophilus influenzae (strain ATCC 51907 / DSM 11121 / KW20 / Rd) protein is Ribose operon repressor (rbsR).